The sequence spans 557 residues: Low affinity inorganic phosphate transporter 8 (557 aa).

Residues 1 to 20 (MATSHGVLRSLDNAKTQSYH) lie on the Cytoplasmic side of the membrane. A helical transmembrane segment spans residues 21-41 (YLAIVIAGMGFFTDAYDLFCI). Residues 42–70 (TAVTKLIGRLYYSDPTNHSPGILPTNVNN) lie on the Extracellular side of the membrane. The helical transmembrane segment at 71–91 (AITGVALCGTLAGQLFFGWLG) threads the bilayer. At 92–98 (DKLGRKK) the chain is on the cytoplasmic side. A helical membrane pass occupies residues 99–119 (VYGITLTTMVGFALLSGLSFG). The Extracellular portion of the chain corresponds to 120 to 130 (STPKTVVTSLC). Residues 131–151 (FFRFWLGFGIGGDYPLSAVIM) traverse the membrane as a helical segment. Topologically, residues 152–162 (SEYANQKTRGS) are cytoplasmic. A helical transmembrane segment spans residues 163 to 183 (FIAAVFAMQGVGILVAGGVAM). The Extracellular segment spans residues 184–210 (FVSKLFLLYFPAPDFETDAVLSTQPEG). Residues 211-231 (DFVWRIVLMFGAVPAALTYYW) form a helical membrane-spanning segment. Topologically, residues 232 to 294 (RMKMPETARY…LFSSEFLNRH (63 aa)) are cytoplasmic. Residues 295–315 (GLHLLGTTSTWFLLDIAFYSL) form a helical membrane-spanning segment. At 316 to 346 (QLTQKDIYPTSGLVYKASKMNAIEEVFQLSR) the chain is on the extracellular side. The helical transmembrane segment at 347 to 367 (AMFAVALIATVPGYWCTVFLI) threads the bilayer. Residues 368-369 (EK) lie on the Cytoplasmic side of the membrane. A helical membrane pass occupies residues 370–390 (IGRFRIQLIGFLVMSVCMWFL). The Extracellular portion of the chain corresponds to 391–414 (GHNYRSFRGEESACKNGSKYSFCN). Residue Asn406 is glycosylated (N-linked (GlcNAc...) asparagine). The chain crosses the membrane as a helical span at residues 415-435 (GNPVMFAILFGLTLFFANFGP). Residues 436–457 (NSTTFIVPAELFPARLRSTCHG) lie on the Cytoplasmic side of the membrane. The chain crosses the membrane as a helical span at residues 458-478 (ISAAAGKSGAIVGAFGVQSYI). The Extracellular portion of the chain corresponds to 479–490 (GNSHDKSKGTKQ). Residues 491-511 (AIMALAVVNLLGFFFTFLVPE) traverse the membrane as a helical segment. The Cytoplasmic portion of the chain corresponds to 512-557 (TQGRSLEEISGEEKDFQGNNADEEISGERNGTRNASVDKSPETSMV). The disordered stretch occupies residues 519–557 (EISGEEKDFQGNNADEEISGERNGTRNASVDKSPETSMV). Residues 543-557 (TRNASVDKSPETSMV) show a composition bias toward polar residues.

It belongs to the major facilitator superfamily. Phosphate:H(+) symporter (TC 2.A.1.9) family.

The protein resides in the cell membrane. The catalysed reaction is phosphate(in) + H(+)(in) = phosphate(out) + H(+)(out). In terms of biological role, low-affinity transporter for external inorganic phosphate (Pi) that may be involved in the acquisition of phosphate released by arbuscular mycorrhizal (AM) fungi (e.g. Glomus versiforme and G.intraradices) during AM symbiosis; not required for mycorrhizal arbuscule development. The protein is Low affinity inorganic phosphate transporter 8 of Medicago truncatula (Barrel medic).